The chain runs to 999 residues: Translation initiation factor IF-2 (999 aa).

A disordered region spans residues 50 to 407; that stretch reads AFVNNTGSPA…RGQGQTVRLS (358 aa). Composition is skewed to pro residues over residues 60–89 and 96–121; these read PAAP…PPGG and PMPP…PPQS. Residues 136 to 162 show a composition bias toward low complexity; that stretch reads VAAAEARAAALKAEQEAAVKAAQAARQ. Residues 163 to 173 show a composition bias toward basic and acidic residues; sequence QQRDNVRREPP. Residues 179-194 are compositionally biased toward pro residues; that stretch reads RPGPRPGPGAMPPRPG. Positions 213-222 are enriched in low complexity; that stretch reads GGRPPARGAG. Residues 244 to 266 are compositionally biased toward pro residues; it reads RPSPASMPPRPSPASMPPRPSPA. The span at 275–367 shows a compositional bias: gly residues; sequence RPGGPGSGRP…GAAGAFGRPG (93 aa). Residues 371 to 380 show a composition bias toward basic residues; the sequence is TRGRKSKKQR. Residues 388-405 show a composition bias toward polar residues; it reads SAPTMSSGAPRGQGQTVR. The tr-type G domain maps to 490–662; sequence SRPPVVTVMG…VLLTADASLE (173 aa). Residues 499-506 are G1; the sequence is GHVDHGKT. 499-506 lines the GTP pocket; it reads GHVDHGKT. The G2 stretch occupies residues 524-528; that stretch reads GITQH. A G3 region spans residues 549–552; it reads DTPG. GTP contacts are provided by residues 549–553 and 603–606; these read DTPGH and NKID. A G4 region spans residues 603–606; it reads NKID. Residues 639 to 641 form a G5 region; it reads AAK.

This sequence belongs to the TRAFAC class translation factor GTPase superfamily. Classic translation factor GTPase family. IF-2 subfamily.

The protein localises to the cytoplasm. Functionally, one of the essential components for the initiation of protein synthesis. Protects formylmethionyl-tRNA from spontaneous hydrolysis and promotes its binding to the 30S ribosomal subunits. Also involved in the hydrolysis of GTP during the formation of the 70S ribosomal complex. The protein is Translation initiation factor IF-2 of Salinispora tropica (strain ATCC BAA-916 / DSM 44818 / JCM 13857 / NBRC 105044 / CNB-440).